Here is a 238-residue protein sequence, read N- to C-terminus: Uridylate kinase (238 aa).

12–15 lines the ATP pocket; that stretch reads KLSG. Gly54 contributes to the UMP binding site. ATP contacts are provided by Gly55 and Arg59. UMP-binding positions include Asp74 and 135 to 142; that span reads TGNPFFTT. 4 residues coordinate ATP: Thr162, Asn163, Tyr168, and Asp171.

It belongs to the UMP kinase family. As to quaternary structure, homohexamer.

The protein localises to the cytoplasm. It catalyses the reaction UMP + ATP = UDP + ADP. The protein operates within pyrimidine metabolism; CTP biosynthesis via de novo pathway; UDP from UMP (UMPK route): step 1/1. With respect to regulation, inhibited by UTP. Functionally, catalyzes the reversible phosphorylation of UMP to UDP. The protein is Uridylate kinase of Rhodopseudomonas palustris (strain BisA53).